The primary structure comprises 102 residues: Small ribosomal subunit protein uS10 (102 aa).

Belongs to the universal ribosomal protein uS10 family. As to quaternary structure, part of the 30S ribosomal subunit.

In terms of biological role, involved in the binding of tRNA to the ribosomes. This Hyperthermus butylicus (strain DSM 5456 / JCM 9403 / PLM1-5) protein is Small ribosomal subunit protein uS10.